The primary structure comprises 205 residues: Small ribosomal subunit protein uS4 (205 aa).

The disordered stretch occupies residues 19 to 45 (IWGRPKSPVNRREYGPGQHGQRRKGKL). Residues 94 to 157 (SRLDAVVYRA…KQLAIVLEAV (64 aa)) enclose the S4 RNA-binding domain.

Belongs to the universal ribosomal protein uS4 family. As to quaternary structure, part of the 30S ribosomal subunit. Contacts protein S5. The interaction surface between S4 and S5 is involved in control of translational fidelity.

Functionally, one of the primary rRNA binding proteins, it binds directly to 16S rRNA where it nucleates assembly of the body of the 30S subunit. With S5 and S12 plays an important role in translational accuracy. This Brucella melitensis biotype 2 (strain ATCC 23457) protein is Small ribosomal subunit protein uS4.